The following is a 342-amino-acid chain: Ferredoxin--NADP reductase (342 aa).

Positions 17, 36, 44, 49, 89, 124, 289, and 330 each coordinate FAD.

It belongs to the ferredoxin--NADP reductase type 2 family. In terms of assembly, homodimer. Requires FAD as cofactor.

It carries out the reaction 2 reduced [2Fe-2S]-[ferredoxin] + NADP(+) + H(+) = 2 oxidized [2Fe-2S]-[ferredoxin] + NADPH. The protein is Ferredoxin--NADP reductase of Nitrobacter winogradskyi (strain ATCC 25391 / DSM 10237 / CIP 104748 / NCIMB 11846 / Nb-255).